Reading from the N-terminus, the 351-residue chain is SKP1-like protein 21 (351 aa).

The interaction with the F-box domain of F-box proteins stretch occupies residues 108–167 (TSAADSLQLKPLVDLTSRALARIIEGKTPEEIREIFHLPDDLTEEEKLEPLKNTMDDPRI). Disordered stretches follow at residues 216 to 240 (VKTS…NGTC) and 330 to 351 (VNFS…AGHK). The span at 217-230 (KTSKSKKKNKKRKE) shows a compositional bias: basic residues. A compositionally biased stretch (polar residues) spans 330–342 (VNFSINGNGTSRR).

It belongs to the SKP1 family. In terms of assembly, part of a SCF (SKP1-cullin-F-box) protein ligase complex. As to expression, expressed in young seedlings, roots, leaves, floral stems, inflorescences, and siliques.

The protein resides in the nucleus. It functions in the pathway protein modification; protein ubiquitination. Involved in ubiquitination and subsequent proteasomal degradation of target proteins. Together with CUL1, RBX1 and a F-box protein, it forms a SCF E3 ubiquitin ligase complex. The functional specificity of this complex depends on the type of F-box protein. In the SCF complex, it serves as an adapter that links the F-box protein to CUL1. In Arabidopsis thaliana (Mouse-ear cress), this protein is SKP1-like protein 21 (ASK21).